A 188-amino-acid polypeptide reads, in one-letter code: HTH-type transcriptional regulator LmrA (188 aa).

The 61-residue stretch at G4–Y64 folds into the HTH tetR-type domain. Positions G27–F46 form a DNA-binding region, H-T-H motif.

Functionally, acts as a repressor of the lincomycin-resistance (lmrAB) and yxaGH operons. This is HTH-type transcriptional regulator LmrA (lmrA) from Bacillus subtilis (strain 168).